The primary structure comprises 247 residues: ATP synthase subunit a, chloroplastic (247 aa).

5 helical membrane passes run 38 to 58 (QVLITSWVVIAILLGSAAIAV), 95 to 115 (VPFIGTMFLFIFVSNWSGALL), 134 to 154 (INTTVALALLTSAAYFYAGLT), 199 to 219 (LVVVVLVSLVPLVVPIPVMFL), and 220 to 240 (GLFTSGIQALIFATLAAAYIG).

It belongs to the ATPase A chain family. F-type ATPases have 2 components, CF(1) - the catalytic core - and CF(0) - the membrane proton channel. CF(1) has five subunits: alpha(3), beta(3), gamma(1), delta(1), epsilon(1). CF(0) has four main subunits: a, b, b' and c.

The protein resides in the plastid. Its subcellular location is the chloroplast thylakoid membrane. Key component of the proton channel; it plays a direct role in the translocation of protons across the membrane. This Ceratophyllum demersum (Rigid hornwort) protein is ATP synthase subunit a, chloroplastic.